The chain runs to 86 residues: Cell division topological specificity factor (86 aa).

This sequence belongs to the MinE family.

Functionally, prevents the cell division inhibition by proteins MinC and MinD at internal division sites while permitting inhibition at polar sites. This ensures cell division at the proper site by restricting the formation of a division septum at the midpoint of the long axis of the cell. This Shewanella frigidimarina (strain NCIMB 400) protein is Cell division topological specificity factor.